A 132-amino-acid polypeptide reads, in one-letter code: Large ribosomal subunit protein uL14 (132 aa).

It belongs to the universal ribosomal protein uL14 family. In terms of assembly, part of the 50S ribosomal subunit. Forms a cluster with proteins L3 and L24e, part of which may contact the 16S rRNA in 2 intersubunit bridges.

Binds to 23S rRNA. Forms part of two intersubunit bridges in the 70S ribosome. This chain is Large ribosomal subunit protein uL14, found in Methanococcus maripaludis (strain DSM 14266 / JCM 13030 / NBRC 101832 / S2 / LL).